The sequence spans 440 residues: Proline--tRNA ligase (440 aa).

It belongs to the class-II aminoacyl-tRNA synthetase family. ProS type 2 subfamily. In terms of assembly, homodimer.

Its subcellular location is the cytoplasm. It catalyses the reaction tRNA(Pro) + L-proline + ATP = L-prolyl-tRNA(Pro) + AMP + diphosphate. Functionally, catalyzes the attachment of proline to tRNA(Pro) in a two-step reaction: proline is first activated by ATP to form Pro-AMP and then transferred to the acceptor end of tRNA(Pro). In Methylocella silvestris (strain DSM 15510 / CIP 108128 / LMG 27833 / NCIMB 13906 / BL2), this protein is Proline--tRNA ligase.